Consider the following 676-residue polypeptide: UvrABC system protein B (676 aa).

The Helicase ATP-binding domain occupies 26–414 (EGLENGLAHQ…SDGEIAEQVV (389 aa)). 39-46 (GVTGSGKT) serves as a coordination point for ATP. The short motif at 92 to 115 (YFDYYQPEAYVPTTDTFIEKDSSV) is the Beta-hairpin element. In terms of domain architecture, Helicase C-terminal spans 432-598 (QVDDLLSEIR…ALKKDVADIL (167 aa)). Positions 636–671 (EKAIQKLESKMYQHAKDLEFEQAAQVRDEIDNLRKQ) constitute a UVR domain.

The protein belongs to the UvrB family. As to quaternary structure, forms a heterotetramer with UvrA during the search for lesions. Interacts with UvrC in an incision complex.

The protein localises to the cytoplasm. The UvrABC repair system catalyzes the recognition and processing of DNA lesions. A damage recognition complex composed of 2 UvrA and 2 UvrB subunits scans DNA for abnormalities. Upon binding of the UvrA(2)B(2) complex to a putative damaged site, the DNA wraps around one UvrB monomer. DNA wrap is dependent on ATP binding by UvrB and probably causes local melting of the DNA helix, facilitating insertion of UvrB beta-hairpin between the DNA strands. Then UvrB probes one DNA strand for the presence of a lesion. If a lesion is found the UvrA subunits dissociate and the UvrB-DNA preincision complex is formed. This complex is subsequently bound by UvrC and the second UvrB is released. If no lesion is found, the DNA wraps around the other UvrB subunit that will check the other stand for damage. The sequence is that of UvrABC system protein B from Aliivibrio fischeri (strain ATCC 700601 / ES114) (Vibrio fischeri).